Reading from the N-terminus, the 1462-residue chain is Iron-sulfur cluster assembly protein SufD (1462 aa).

Disordered stretches follow at residues 500 to 525 (IDNN…DNPY), 938 to 970 (NQNK…GTEQ), and 1111 to 1153 (NIPS…EKEE). A compositionally biased stretch (low complexity) spans 510-523 (NNNNNNNNNNNCDN). Basic and acidic residues predominate over residues 961 to 970 (HIQDEQGTEQ). Residues 1111–1136 (NIPSNNKQTNSNNNSEYNNEQNNCSN) are compositionally biased toward low complexity.

Belongs to the iron-sulfur cluster assembly SufBD family. Component of a complex composed of SufB, SufC and SufD in a stoichiometric ratio of 1:2:1. Interacts with SufB. Interacts with SufC; the interaction enhances the ATPase activity of SufC. Post-translationally, proteolytically cleaved.

It localises to the plastid. Its subcellular location is the apicoplast. It participates in cofactor biosynthesis; iron-sulfur cluster biosynthesis. Participates in the sulfur mobilization (SUF) pathway for iron-sulfur (Fe-S) cluster biogenesis. As part of a complex consisting of SufB-SufC(2)-SufD, involved in assembly of [4Fe-4S] clusters. Enhances the ATPase activity of SufC. The sequence is that of Iron-sulfur cluster assembly protein SufD from Plasmodium falciparum (isolate 3D7).